We begin with the raw amino-acid sequence, 137 residues long: Small ribosomal subunit protein uS12 (137 aa).

Disordered stretches follow at residues 1–21 (MPTI…KSDS) and 33–57 (KVQT…TPKK).

It belongs to the universal ribosomal protein uS12 family. Part of the 30S ribosomal subunit. Contacts proteins S8 and S17. May interact with IF1 in the 30S initiation complex.

With S4 and S5 plays an important role in translational accuracy. In terms of biological role, interacts with and stabilizes bases of the 16S rRNA that are involved in tRNA selection in the A site and with the mRNA backbone. Located at the interface of the 30S and 50S subunits, it traverses the body of the 30S subunit contacting proteins on the other side and probably holding the rRNA structure together. The combined cluster of proteins S8, S12 and S17 appears to hold together the shoulder and platform of the 30S subunit. The polypeptide is Small ribosomal subunit protein uS12 (Streptococcus pyogenes serotype M1).